The chain runs to 156 residues: Small ribosomal subunit protein uS7 (156 aa).

Belongs to the universal ribosomal protein uS7 family. As to quaternary structure, part of the 30S ribosomal subunit. Contacts proteins S9 and S11.

Functionally, one of the primary rRNA binding proteins, it binds directly to 16S rRNA where it nucleates assembly of the head domain of the 30S subunit. Is located at the subunit interface close to the decoding center, probably blocks exit of the E-site tRNA. The sequence is that of Small ribosomal subunit protein uS7 from Leptothrix cholodnii (strain ATCC 51168 / LMG 8142 / SP-6) (Leptothrix discophora (strain SP-6)).